Consider the following 360-residue polypeptide: Thiol protease SEN102 (360 aa).

The N-terminal stretch at 1–20 (MAKPKFIALALVALSFLSIA) is a signal peptide. The propeptide at 21-133 (QSIPFTEKDL…ENVGSLPAAS (113 aa)) is activation peptide. 3 cysteine pairs are disulfide-bonded: Cys151-Cys193, Cys185-Cys225, and Cys283-Cys335. Cys154 is a catalytic residue. Residues His289 and Asn310 contribute to the active site. Asn353 carries an N-linked (GlcNAc...) asparagine glycan. The Prevents secretion from ER motif lies at 357–360 (RDEL).

This sequence belongs to the peptidase C1 family.

It is found in the endoplasmic reticulum lumen. This chain is Thiol protease SEN102 (SEN102), found in Hemerocallis sp. (Daylily).